Here is a 405-residue protein sequence, read N- to C-terminus: Phosphopentomutase (405 aa).

Mn(2+) is bound by residues D10, D305, H310, D346, H347, and H358.

This sequence belongs to the phosphopentomutase family. It depends on Mn(2+) as a cofactor.

It is found in the cytoplasm. It carries out the reaction 2-deoxy-alpha-D-ribose 1-phosphate = 2-deoxy-D-ribose 5-phosphate. It catalyses the reaction alpha-D-ribose 1-phosphate = D-ribose 5-phosphate. It functions in the pathway carbohydrate degradation; 2-deoxy-D-ribose 1-phosphate degradation; D-glyceraldehyde 3-phosphate and acetaldehyde from 2-deoxy-alpha-D-ribose 1-phosphate: step 1/2. Isomerase that catalyzes the conversion of deoxy-ribose 1-phosphate (dRib-1-P) and ribose 1-phosphate (Rib-1-P) to deoxy-ribose 5-phosphate (dRib-5-P) and ribose 5-phosphate (Rib-5-P), respectively. In Methylobacterium sp. (strain 4-46), this protein is Phosphopentomutase.